Reading from the N-terminus, the 92-residue chain is MANHSSAKKAARQTVKRTLINKKRSSAIKTFIKKVVHEISIGNKENANIALSVAQSKIMQGVKKNIIKLNTASRKISRLSRQIKSLKVNNTL.

The protein belongs to the bacterial ribosomal protein bS20 family.

In terms of biological role, binds directly to 16S ribosomal RNA. This chain is Small ribosomal subunit protein bS20, found in Rickettsia conorii (strain ATCC VR-613 / Malish 7).